Consider the following 466-residue polypeptide: Alpha-galacturonidase (466 aa).

11 to 78 (VKIAYIGGGS…GKWNYETANT (68 aa)) contributes to the NAD(+) binding site. Asn-157 contributes to the substrate binding site. Cys-179 is a binding site for Mn(2+). His-180 acts as the Proton donor in catalysis. His-216 is a binding site for Mn(2+).

This sequence belongs to the glycosyl hydrolase 4 family. As to quaternary structure, homotetramer. NAD(+) serves as cofactor. Requires Mn(2+) as cofactor.

The catalysed reaction is [(1-&gt;4)-alpha-D-galacturonosyl](n) + H2O = alpha-D-galacturonate + [(1-&gt;4)-alpha-D-galacturonosyl](n-1). In terms of biological role, alpha-galacturonidase able to catalyze the hydrolysis of the chromogenic substrate p-nitrophenyl-alpha-D-galacturonic acid (pNPalphaGalUA). It is probable that alpha-1,4-di-galacturonate (GalUA(2)) is the naturally occurring substrate. The chain is Alpha-galacturonidase from Lachnoclostridium phytofermentans (strain ATCC 700394 / DSM 18823 / ISDg) (Clostridium phytofermentans).